A 166-amino-acid polypeptide reads, in one-letter code: Mitochondrial fission process protein 1 (166 aa).

The next 2 helical transmembrane spans lie at Ser34–Ala54 and Ala78–Phe98. Lys123 bears the N6-succinyllysine mark. The helical transmembrane segment at Leu129–Leu149 threads the bilayer.

It belongs to the MTFP1 family.

Its subcellular location is the mitochondrion inner membrane. In terms of biological role, involved in the mitochondrial division probably by regulating membrane fission. Loss-of-function leads to apoptosis. The sequence is that of Mitochondrial fission process protein 1 (Mtfp1) from Mus musculus (Mouse).